The primary structure comprises 282 residues: Bifunctional protein FolD (282 aa).

NADP(+) is bound by residues 165 to 167 (GAS) and Ile231.

The protein belongs to the tetrahydrofolate dehydrogenase/cyclohydrolase family. In terms of assembly, homodimer.

It catalyses the reaction (6R)-5,10-methylene-5,6,7,8-tetrahydrofolate + NADP(+) = (6R)-5,10-methenyltetrahydrofolate + NADPH. The catalysed reaction is (6R)-5,10-methenyltetrahydrofolate + H2O = (6R)-10-formyltetrahydrofolate + H(+). It participates in one-carbon metabolism; tetrahydrofolate interconversion. Functionally, catalyzes the oxidation of 5,10-methylenetetrahydrofolate to 5,10-methenyltetrahydrofolate and then the hydrolysis of 5,10-methenyltetrahydrofolate to 10-formyltetrahydrofolate. This chain is Bifunctional protein FolD, found in Francisella tularensis subsp. holarctica (strain FTNF002-00 / FTA).